The sequence spans 101 residues: Secreted enzymes activator (101 aa).

Positions 1–10 (MSRRRRRASA) are enriched in basic residues. Disordered regions lie at residues 1–26 (MSRR…PYGS) and 45–101 (TRLA…NGRG). Positions 45–60 (TRLAASSRASRAAVGS) are enriched in low complexity. The H-T-H motif DNA-binding region spans 55-74 (RAAVGSFDGAKNRPASSRRQ).

In terms of biological role, increases the production of several extracellular enzymes, like alkaline phosphatase, amylase, protease or lipase. When present in high concentrations, delays the production of pigments and sporulation. The protein is Secreted enzymes activator (saf) of Streptomyces griseus.